The primary structure comprises 195 residues: Imidazoleglycerol-phosphate dehydratase (195 aa).

It belongs to the imidazoleglycerol-phosphate dehydratase family.

Its subcellular location is the cytoplasm. It carries out the reaction D-erythro-1-(imidazol-4-yl)glycerol 3-phosphate = 3-(imidazol-4-yl)-2-oxopropyl phosphate + H2O. Its pathway is amino-acid biosynthesis; L-histidine biosynthesis; L-histidine from 5-phospho-alpha-D-ribose 1-diphosphate: step 6/9. This chain is Imidazoleglycerol-phosphate dehydratase, found in Cereibacter sphaeroides (strain ATCC 17025 / ATH 2.4.3) (Rhodobacter sphaeroides).